Here is a 447-residue protein sequence, read N- to C-terminus: Clusterin (447 aa).

A signal peptide spans 1–21 (MKILLLCVALLLTWDNGMVLG). Positions 77–80 (KKKK) match the Nuclear localization signal motif. Disulfide bonds link C101/C312, C112/C304, C115/C301, C120/C294, and C128/C284. The N-linked (GlcNAc...) asparagine glycan is linked to N102. S132 carries the phosphoserine modification. N-linked (GlcNAc...) asparagine glycans are attached at residues N144, N290, N327, N353, and N373. Position 394 is a phosphoserine (S394). The Nuclear localization signal signature appears at 441 to 445 (RRKSR).

Belongs to the clusterin family. As to quaternary structure, antiparallel disulfide-linked heterodimer of an alpha chain and a beta chain. Self-associates and forms higher oligomers. Interacts with a broad range of misfolded proteins, including APP, APOC2 and LYZ. Slightly acidic pH promotes interaction with misfolded proteins. Forms high-molecular weight oligomers upon interaction with misfolded proteins. Interacts with APOA1, LRP2, CLUAP1 and PON1. Interacts with the complement membrane attack complex. Interacts (via alpha chain) with XRCC6. Interacts with SYVN1, COMMD1, BTRC, CUL1 and with ubiquitin and SCF (SKP1-CUL1-F-box protein) E3 ubiquitin-protein ligase complexes. Interacts (via alpha chain) with BAX in stressed cells, where BAX undergoes a conformation change leading to association with the mitochondrial membrane. Does not interact with BAX in unstressed cells. Found in a complex with LTF, CLU, EPPIN and SEMG1. Interacts (immaturely glycosylated pre-secreted form) with HSPA5; this interaction promotes CLU stability and facilitates stress-induced CLU retrotranslocation from the secretory pathway to the mitochondria, thereby reducing stress-induced apoptosis by stabilizing mitochondrial membrane integrity. Interacts with BCL2L1; this interaction releases and activates BAX and promotes cell death. Interacts with TGFBR2 and ACVR1. Interacts (secreted form) with STMN3; this interaction may act as an important modulator during neuronal differentiation. Interacts with VLDLR and LRP8. Proteolytically cleaved on its way through the secretory system, probably within the Golgi lumen. Proteolytic cleavage is not necessary for its chaperone activity. All non-secreted forms are not proteolytically cleaved. Chaperone activity of uncleaved forms is dependent on a non-reducing environment. Post-translationally, polyubiquitinated, leading to proteasomal degradation. Under cellular stress, the intracellular level of cleaved form is reduced due to proteasomal degradation. In terms of processing, extensively glycosylated with sulfated N-linked carbohydrates. About 30% of the protein mass is comprised of complex N-linked carbohydrate. Endoplasmic reticulum (ER) stress induces changes in glycosylation status and increases level of hypoglycosylated forms. Core carbohydrates are essential for chaperone activity. Non-secreted forms are hypoglycosylated or unglycosylated. In terms of tissue distribution, detected in Sertoli cells (at protein level). Detected in cultured Sertoli cells, testis, epididymis, liver and brain.

Its subcellular location is the secreted. It is found in the nucleus. The protein localises to the cytoplasm. It localises to the mitochondrion membrane. The protein resides in the cytosol. Its subcellular location is the microsome. It is found in the endoplasmic reticulum. The protein localises to the mitochondrion. It localises to the perinuclear region. The protein resides in the cytoplasmic vesicle. Its subcellular location is the secretory vesicle. It is found in the chromaffin granule. In terms of biological role, functions as extracellular chaperone that prevents aggregation of non native proteins. Prevents stress-induced aggregation of blood plasma proteins. Inhibits formation of amyloid fibrils by APP, APOC2, B2M, CALCA, CSN3, SNCA and aggregation-prone LYZ variants (in vitro). Does not require ATP. Maintains partially unfolded proteins in a state appropriate for subsequent refolding by other chaperones, such as HSPA8/HSC70. Does not refold proteins by itself. Binding to cell surface receptors triggers internalization of the chaperone-client complex and subsequent lysosomal or proteasomal degradation. When secreted, protects cells against apoptosis and against cytolysis by complement: inhibits assembly of the complement membrane attack complex (MAC) by preventing polymerization of C9 pore component of the MAC complex. Intracellular forms interact with ubiquitin and SCF (SKP1-CUL1-F-box protein) E3 ubiquitin-protein ligase complexes and promote the ubiquitination and subsequent proteasomal degradation of target proteins. Promotes proteasomal degradation of COMMD1 and IKBKB. Modulates NF-kappa-B transcriptional activity. Following stress, promotes apoptosis. Inhibits apoptosis when associated with the mitochondrial membrane by interference with BAX-dependent release of cytochrome c into the cytoplasm. Plays a role in the regulation of cell proliferation. An intracellular form suppresses stress-induced apoptosis by stabilizing mitochondrial membrane integrity through interaction with HSPA5. Secreted form does not affect caspase or BAX-mediated intrinsic apoptosis and TNF-induced NF-kappa-B-activity. Secreted form act as an important modulator during neuronal differentiation through interaction with STMN3. Plays a role in the clearance of immune complexes that arise during cell injury. The protein is Clusterin of Rattus norvegicus (Rat).